The following is a 122-amino-acid chain: Small ribosomal subunit protein bS6 (122 aa).

Residues 95–122 (AETAPSPMMKEVQREEAKKAAAQSEQAA) are disordered.

The protein belongs to the bacterial ribosomal protein bS6 family.

Functionally, binds together with bS18 to 16S ribosomal RNA. The sequence is that of Small ribosomal subunit protein bS6 from Ralstonia nicotianae (strain ATCC BAA-1114 / GMI1000) (Ralstonia solanacearum).